The chain runs to 186 residues: Ribosome-recycling factor (186 aa).

It belongs to the RRF family.

Its subcellular location is the cytoplasm. Responsible for the release of ribosomes from messenger RNA at the termination of protein biosynthesis. May increase the efficiency of translation by recycling ribosomes from one round of translation to another. This Leptothrix cholodnii (strain ATCC 51168 / LMG 8142 / SP-6) (Leptothrix discophora (strain SP-6)) protein is Ribosome-recycling factor.